The following is a 1090-amino-acid chain: UPF0507 protein C1Q_01007 (1090 aa).

Residues 289-436 (FSVNQLLTDF…FEDFNKNTGN (148 aa)) enclose the VPS9 domain.

The protein belongs to the UPF0507 family.

In Saccharomyces cerevisiae (strain JAY291) (Baker's yeast), this protein is UPF0507 protein C1Q_01007.